Reading from the N-terminus, the 247-residue chain is Sugar fermentation stimulation protein homolog (247 aa).

It belongs to the SfsA family.

This is Sugar fermentation stimulation protein homolog from Oleidesulfovibrio alaskensis (strain ATCC BAA-1058 / DSM 17464 / G20) (Desulfovibrio alaskensis).